We begin with the raw amino-acid sequence, 919 residues long: Alpha-amylase (919 aa).

Residues 1–33 (MPATRRTARVRRVAAVTVTALAAALLPPLAARA) form the signal peptide. Residues N182 and D281 each contribute to the Ca(2+) site. D312 functions as the Nucleophile in the catalytic mechanism. H316 serves as a coordination point for Ca(2+). The active-site Proton donor is E346. The segment at 704-729 (ASGRLHHRHPARRGGAHRRLPGPRGR) is disordered. Residues 707–724 (RLHHRHPARRGGAHRRLP) are compositionally biased toward basic residues.

This sequence belongs to the glycosyl hydrolase 13 family. In terms of assembly, monomer. The cofactor is Ca(2+).

It localises to the secreted. It carries out the reaction Endohydrolysis of (1-&gt;4)-alpha-D-glucosidic linkages in polysaccharides containing three or more (1-&gt;4)-alpha-linked D-glucose units.. In Streptomyces lividans, this protein is Alpha-amylase (amy).